The primary structure comprises 202 residues: Probable molybdenum cofactor guanylyltransferase (202 aa).

GTP is bound by residues 13–15, K25, D71, and D103; that span reads LAG. D103 is a binding site for Mg(2+).

The protein belongs to the MobA family. Mg(2+) serves as cofactor.

The protein resides in the cytoplasm. It carries out the reaction Mo-molybdopterin + GTP + H(+) = Mo-molybdopterin guanine dinucleotide + diphosphate. Functionally, transfers a GMP moiety from GTP to Mo-molybdopterin (Mo-MPT) cofactor (Moco or molybdenum cofactor) to form Mo-molybdopterin guanine dinucleotide (Mo-MGD) cofactor. This is Probable molybdenum cofactor guanylyltransferase from Opitutus terrae (strain DSM 11246 / JCM 15787 / PB90-1).